A 118-amino-acid polypeptide reads, in one-letter code: Large ribosomal subunit protein bL19 (118 aa).

The protein belongs to the bacterial ribosomal protein bL19 family.

In terms of biological role, this protein is located at the 30S-50S ribosomal subunit interface and may play a role in the structure and function of the aminoacyl-tRNA binding site. The polypeptide is Large ribosomal subunit protein bL19 (Onion yellows phytoplasma (strain OY-M)).